The chain runs to 200 residues: uncharacterized protein (200 aa).

An N-terminal signal peptide occupies residues 1-19; sequence MNAMFHSLFALSFVSLVAS. A helical transmembrane segment spans residues 148-168; sequence FMVIVSLAAFCISVLAGLALQ.

It localises to the membrane. This is an uncharacterized protein from Caenorhabditis elegans.